The primary structure comprises 687 residues: Putative secreted metallopeptidase (687 aa).

Residues 1–22 form the signal peptide; the sequence is MLFTSTAVAALSGALLIQPALA. 5 N-linked (GlcNAc...) asparagine glycosylation sites follow: Asn54, Asn114, Asn252, Asn256, and Asn379.

The protein belongs to the peptidase M10B family.

It localises to the secreted. In Arthroderma benhamiae (strain ATCC MYA-4681 / CBS 112371) (Trichophyton mentagrophytes), this protein is Putative secreted metallopeptidase.